Here is a 188-residue protein sequence, read N- to C-terminus: Inosine triphosphate pyrophosphatase (188 aa).

9-14 is an ITP binding site; sequence TGNAKK. Residue Glu39 coordinates Mg(2+). ITP contacts are provided by residues Lys51, 67-68, Lys84, 143-146, Lys166, and 171-172; these read DT, FGWD, and HR.

The protein belongs to the HAM1 NTPase family. As to quaternary structure, homodimer. The cofactor is Mg(2+). Mn(2+) is required as a cofactor.

It is found in the cytoplasm. It carries out the reaction ITP + H2O = IMP + diphosphate + H(+). The enzyme catalyses dITP + H2O = dIMP + diphosphate + H(+). The catalysed reaction is XTP + H2O = XMP + diphosphate + H(+). In terms of biological role, pyrophosphatase that hydrolyzes non-canonical purine nucleotides such as inosine triphosphate (ITP), deoxyinosine triphosphate (dITP) or xanthosine 5'-triphosphate (XTP) to their respective monophosphate derivatives. The enzyme does not distinguish between the deoxy- and ribose forms. Probably excludes non-canonical purines from RNA and DNA precursor pools, thus preventing their incorporation into RNA and DNA and avoiding chromosomal lesions. The protein is Inosine triphosphate pyrophosphatase of Aedes aegypti (Yellowfever mosquito).